Reading from the N-terminus, the 293-residue chain is Acidic endochitinase SE2 (293 aa).

The N-terminal stretch at methionine 1 to glycine 25 is a signal peptide. A GH18 domain is found at serine 26–valine 293. Disulfide bonds link cysteine 45-cysteine 91 and cysteine 75-cysteine 81. Glutamate 151 (proton donor) is an active-site residue. A disulfide bridge connects residues cysteine 183 and cysteine 212.

This sequence belongs to the glycosyl hydrolase 18 family. Chitinase class II subfamily. As to expression, accumulates in leaves during infection.

The protein resides in the secreted. The protein localises to the extracellular space. The enzyme catalyses Random endo-hydrolysis of N-acetyl-beta-D-glucosaminide (1-&gt;4)-beta-linkages in chitin and chitodextrins.. Functionally, this protein functions as a defense against chitin containing fungal pathogens. This endochitinase also exhibits exochitinase activity, i.e. it is capable of hydrolyzing chito-oligosaccharides, including chitobiose. The protein is Acidic endochitinase SE2 (SE2) of Beta vulgaris (Sugar beet).